The sequence spans 130 residues: Small ribosomal subunit protein uS8 (130 aa).

Belongs to the universal ribosomal protein uS8 family. As to quaternary structure, part of the 30S ribosomal subunit. Contacts proteins S5 and S12.

In terms of biological role, one of the primary rRNA binding proteins, it binds directly to 16S rRNA central domain where it helps coordinate assembly of the platform of the 30S subunit. The protein is Small ribosomal subunit protein uS8 of Vibrio cholerae serotype O1 (strain ATCC 39541 / Classical Ogawa 395 / O395).